Consider the following 185-residue polypeptide: Protein GrpE (185 aa).

Residues 1 to 40 are disordered; sequence MSEEKKDEILEQETVETKEEIKTEEAEQKTESLEEKVARL.

Belongs to the GrpE family. In terms of assembly, homodimer.

The protein localises to the cytoplasm. Its function is as follows. Participates actively in the response to hyperosmotic and heat shock by preventing the aggregation of stress-denatured proteins, in association with DnaK and GrpE. It is the nucleotide exchange factor for DnaK and may function as a thermosensor. Unfolded proteins bind initially to DnaJ; upon interaction with the DnaJ-bound protein, DnaK hydrolyzes its bound ATP, resulting in the formation of a stable complex. GrpE releases ADP from DnaK; ATP binding to DnaK triggers the release of the substrate protein, thus completing the reaction cycle. Several rounds of ATP-dependent interactions between DnaJ, DnaK and GrpE are required for fully efficient folding. This Aliarcobacter butzleri (strain RM4018) (Arcobacter butzleri) protein is Protein GrpE.